Here is a 235-residue protein sequence, read N- to C-terminus: Pyridoxine/pyridoxamine 5'-phosphate oxidase (235 aa).

Substrate contacts are provided by residues 30–33 (RQEY) and Lys88. FMN is bound by residues 83 to 88 (RTVLLK), 98 to 99 (YT), Arg104, Lys105, and Gln127. 3 residues coordinate substrate: Tyr145, Arg149, and Ser153. Residues 162 to 163 (QS) and Trp207 contribute to the FMN site. 213–215 (RLH) is a substrate binding site. Arg217 provides a ligand contact to FMN.

The protein belongs to the pyridoxamine 5'-phosphate oxidase family. In terms of assembly, homodimer. Requires FMN as cofactor.

It carries out the reaction pyridoxamine 5'-phosphate + O2 + H2O = pyridoxal 5'-phosphate + H2O2 + NH4(+). The catalysed reaction is pyridoxine 5'-phosphate + O2 = pyridoxal 5'-phosphate + H2O2. It participates in cofactor metabolism; pyridoxal 5'-phosphate salvage; pyridoxal 5'-phosphate from pyridoxamine 5'-phosphate: step 1/1. The protein operates within cofactor metabolism; pyridoxal 5'-phosphate salvage; pyridoxal 5'-phosphate from pyridoxine 5'-phosphate: step 1/1. Catalyzes the oxidation of either pyridoxine 5'-phosphate (PNP) or pyridoxamine 5'-phosphate (PMP) into pyridoxal 5'-phosphate (PLP). This Bacteroides fragilis (strain YCH46) protein is Pyridoxine/pyridoxamine 5'-phosphate oxidase.